We begin with the raw amino-acid sequence, 675 residues long: Probable potassium transport system protein Kup (675 aa).

The next 12 helical transmembrane spans lie at 12-32, 55-75, 98-118, 143-163, 170-190, 216-236, 249-269, 296-316, 345-365, 374-394, 401-421, and 428-448; these read LGMLITLGVVYGDIGTSPLYV, VSLIFWTLMLITTVKYVLVAL, WLIFVALIGGAALLADGTLTP, WLVPLSVTLILVSLFTIQVLG, SFGPMMLLWFIVIGGIGLLNI, MGIFILGSVFLATTGAEALYS, TWPFVYAMLILNYLGQGAWML, IAMIVLATVAAIIASQALITG, IYIGAINWLLCLVTLSIVWLF, AYGLAITLTMLMTTILLSQWV, FWSLALLAGFGLLETLFLVAS, and GGYLTLGLTLMIFLIMVVWFF.

This sequence belongs to the HAK/KUP transporter (TC 2.A.72) family.

It is found in the cell membrane. It carries out the reaction K(+)(in) + H(+)(in) = K(+)(out) + H(+)(out). In terms of biological role, transport of potassium into the cell. Likely operates as a K(+):H(+) symporter. The sequence is that of Probable potassium transport system protein Kup from Levilactobacillus brevis (strain ATCC 367 / BCRC 12310 / CIP 105137 / JCM 1170 / LMG 11437 / NCIMB 947 / NCTC 947) (Lactobacillus brevis).